The sequence spans 592 residues: Outer spore wall assembly protein SHE10 (592 aa).

Positions 1–23 (MRFFKRFLLTLTVFIYTLRYLHC) are cleaved as a signal peptide. 2 coiled-coil regions span residues 354-385 (ENNI…LYEE) and 448-583 (LNQF…KQMG). Residues 507-580 (QSEQEERIKS…EVRKQEEARK (74 aa)) show a composition bias toward basic and acidic residues. The interval 507 to 592 (QSEQEERIKS…GSPPPPQQQQ (86 aa)) is disordered.

It belongs to the SHE10 family. In terms of assembly, component of the mitochondria-localized RNase mitochondrial RNA-processing (RNase MRP) composed of one single RNA encoded by the NME1 gene and at least 31 proteins. Absent in the nucleus-localized RNase MRP (NuMRP).

The protein resides in the mitochondrion. In terms of biological role, involved in spore wall assembly. May be a component of the mitochondrial RNase MRP (MtMRP), a ribonucleoprotein endoribonuclease involved in the cleaving RNA transcripts to generate primers for DNA replication in mitochondria. The protein is Outer spore wall assembly protein SHE10 of Vanderwaltozyma polyspora (strain ATCC 22028 / DSM 70294 / BCRC 21397 / CBS 2163 / NBRC 10782 / NRRL Y-8283 / UCD 57-17) (Kluyveromyces polysporus).